Consider the following 70-residue polypeptide: Dermaseptin-H3 (70 aa).

An N-terminal signal peptide occupies residues 1-22; the sequence is MAFLKKSLFLVLFLGMVSLSIC. The propeptide occupies 23 to 43; the sequence is EEEKRENEDEELQEDDEQSEM. The segment at 25–44 is disordered; the sequence is EKRENEDEELQEDDEQSEMK. Residues 30–40 are compositionally biased toward acidic residues; it reads EDEELQEDDEQ. Leucine amide is present on Leu-70.

In terms of tissue distribution, expressed by the skin glands.

The protein localises to the secreted. In terms of biological role, has antibacterial activity against the Gram-negative bacteria E.coli and P.aeruginosa, and the Gram-positive bacteria S.aureus and M.luteus. Has antiprotozoal activity against L.amazonensis. No hemolytic activity. The protein is Dermaseptin-H3 of Pithecopus hypochondrialis (Orange-legged leaf frog).